The primary structure comprises 943 residues: MTDYKATLNLPDTAFPMKAGLPQREPQILQRWDSIGLYQKLREIGKDRPKFVLHDGPPYANGKIHIGHALNKILKDMIVRSKTLSGFDAPYVPGWDCHGLPIEHKVEVTHGKHLTADRTRELCREYAAEQIEGQKTEFIRLGVLGDWDNPYKTMNFANEAGEIRALAEMVKQGFVFKGLKPVNWCFDCGSALAEAEVEYADKKSQTIDVAFPVADADKLAAAFGLPALAKPAAIVIWTTTPWTIPANQALNIHPEFKYALVDTGERLLVLAEELVESCLKRYNLEGSVIATAQGSALELVNFRHPFYDRLSPVYLADYVELGAGTGVVHSAPAYGEDDFVTCKRYGMVNDDILTPVQSNGVYVESLEFFGGQFIWKANPAIVEKLSEVGALMHTETISHSYMHCWRHKTPLIYRATAQWFVGMDKQPSTGEPLRERALKAIEDTQFVPAWGQARLHSMIANRPDWCISRQRNWGVPIPFFLHKQTGELHPRTVELMEAVAKRVEQEGIEAWFKLDAAELLGDEAGQYDKITDTLDVWFDSGTTHWHVLRGSHDIGHATGPRADLYLEGSDQHRGWFHSSLLTGCAIDNHAPYRELLTHGFTVDESGRKMSKSLGNTIEPEKVNNTLGADILRLWVSATDYSGEMAVSEQILQRSADAYRRIRNTARFLLSNLSGFDPARDLLAPEDMLALDRWAVDRTLLLQRELEEHYSEYRFWNVYSKIHNFCVQELGGFYLDIIKDRQYTTGANSVARRSCQTALYHISEALVRWIAPILAFTADEIWQYLPGERNESVMLNGWYQGLSELPEGTELDRAYWDRVMAVKAAVNKELENQRTAKVIGGNLQAEVTLFAEEGLSADLSKLGDELRFVLITSAASVVPFAQAPADAVATEVEGLKLKVVKSGHAKCGRCWHFRADVGSHPEHPEICSRCVDNLSGSGEVRHYA.

The short motif at 58–68 (PYANGKIHIGH) is the 'HIGH' region element. Glu567 provides a ligand contact to L-isoleucyl-5'-AMP. A 'KMSKS' region motif is present at residues 608 to 612 (KMSKS). Residue Lys611 participates in ATP binding. Positions 906, 909, 926, and 929 each coordinate Zn(2+).

Belongs to the class-I aminoacyl-tRNA synthetase family. IleS type 1 subfamily. Monomer. The cofactor is Zn(2+).

The protein localises to the cytoplasm. The catalysed reaction is tRNA(Ile) + L-isoleucine + ATP = L-isoleucyl-tRNA(Ile) + AMP + diphosphate. Functionally, catalyzes the attachment of isoleucine to tRNA(Ile). As IleRS can inadvertently accommodate and process structurally similar amino acids such as valine, to avoid such errors it has two additional distinct tRNA(Ile)-dependent editing activities. One activity is designated as 'pretransfer' editing and involves the hydrolysis of activated Val-AMP. The other activity is designated 'posttransfer' editing and involves deacylation of mischarged Val-tRNA(Ile). This Pseudomonas putida (strain W619) protein is Isoleucine--tRNA ligase.